Consider the following 345-residue polypeptide: Transcription factor 19 (345 aa).

One can recognise an FHA domain in the interval 31-88; the sequence is YRLGHRADLCDVALRPQQEPGLISGIHAELHAEPRGDDWRVSLEDHSSQGTLVNNVRL. The residue at position 78 (S78) is a Phosphoserine. Disordered stretches follow at residues 147–167 and 190–227; these read AGFR…STLS and LTFS…RKSV. The PHD-type zinc finger occupies 293 to 342; sequence AAPCCCLPQEETVAWVQCDGCDVWFHVACVGCSIQAAREADFRCPGCRAG. 8 residues coordinate Zn(2+): C296, C298, C310, C313, H318, C321, C336, and C339.

The protein localises to the nucleus. In terms of biological role, potential transcription factor that may play a role in the regulation of genes involved in cell cycle G1/S transition. May bind to regulatory elements of genes, including the promoter of the transcription factor FOXO1. In Pan troglodytes (Chimpanzee), this protein is Transcription factor 19 (TCF19).